The sequence spans 576 residues: Type II restriction enzyme BsuRI (576 aa).

In terms of assembly, monomer. Mg(2+) is required as a cofactor.

It catalyses the reaction Endonucleolytic cleavage of DNA to give specific double-stranded fragments with terminal 5'-phosphates.. A P subtype restriction enzyme that recognizes the double-stranded sequence 5'-GGCC-3' and cleaves after G-2. This chain is Type II restriction enzyme BsuRI (hsdRR), found in Bacillus subtilis.